Consider the following 137-residue polypeptide: Ribosome-binding factor A (137 aa).

Belongs to the RbfA family. As to quaternary structure, monomer. Binds 30S ribosomal subunits, but not 50S ribosomal subunits or 70S ribosomes.

The protein localises to the cytoplasm. Its function is as follows. One of several proteins that assist in the late maturation steps of the functional core of the 30S ribosomal subunit. Associates with free 30S ribosomal subunits (but not with 30S subunits that are part of 70S ribosomes or polysomes). Required for efficient processing of 16S rRNA. May interact with the 5'-terminal helix region of 16S rRNA. The chain is Ribosome-binding factor A from Rhodopseudomonas palustris (strain BisB18).